The chain runs to 281 residues: Merozoite surface protein 1 (281 aa).

The signal sequence occupies residues 1-19 (MKIIFFLCSFLFFIINTQC). Residues 63–100 (ASAQSGASAQSGASAQSGASAQSGTSGPSGPSGTSPSS) show a composition bias toward low complexity. The disordered stretch occupies residues 63–126 (ASAQSGASAQ…PADASDSDAK (64 aa)). Residues 101-110 (RSNTLPRSNT) are compositionally biased toward polar residues. Asn-109 carries an N-linked (GlcNAc...) asparagine glycan. The segment covering 111–120 (SSGASPPADA) has biased composition (low complexity). N-linked (GlcNAc...) asparagine glycosylation is present at Asn-248.

Forms a complex composed of subunits p83, p30, p38, and p42 which remain non-covalently associated; the complex is formed at the merozoite surface prior to egress from host erythrocytes. Forms a complex composed of processed MSP1 subunits, MSP6 subunit p36 and MSP7; the complex is formed at the merozoite surface prior to egress from host erythrocytes. Within the complex, interacts (via subunit p38) with MSP6 subunit p36 and (via subunits p83, p30 and p38) with MSP7 (via subunit p22). Forms a complex composed of MSP1, MSP6, DBLMSP1 and DBLMSP2. Within the complex, interacts (via subunit p38) with DBLMSP1 and DBLMSP2. Forms a complex composed of MSP1, and rhoptry proteins RhopH3, RAP1 and CLAG9/RhopH3. Within the complex, interacts (via subunits p42 and p19) with RhopH3 (via C-terminus). Forms a complex composed of MSP1, MSP6, MSP7, MSP9 and MSP3; within the complex, MSP6 and MSP9 mediate the binding to the host erythrocyte. Interacts (via subunits p19 and p42) with MSP9; the interaction is direct; MSP1 subunits p19 or p42, and MSP9 form a co-ligand complex that interacts with host SLC4A1/Band 3 protein. May interact with PFD6. Interacts with host spectrin. In terms of processing, the p190 precursor is cleaved by SUB1 prior to merozoite egress into 4 subunits p83, p30, p38, and p42 which remain non-covalently associated. SUB1-mediated proteolytic cleavage occurs in an orderly manner; the first cleavage occurs at the p30/p38 site, followed by cleavage at the p83/p30 site, the last cleavage occurs at the p38/p42 site. The order of cleavage is essential for parasite viability. SUB1-mediated processing is essential for merozoite egress. In a second processing step during erythrocyte invasion, p42 is cleaved by SUB2 into p33 and p19; the latter remains attached to the merozoite surface via its GPI-anchor and is endocytosed during the subsequent ring stage.

It is found in the cell membrane. The protein localises to the secreted. During the asexual blood stage, involved in merozoite egress from host erythrocytes possibly via its interaction with the host cytoskeleton protein spectrin resulting in the destabilization of the host cytoskeleton and thus leading to erythrocyte cell membrane rupture. Involved in the binding to host erythrocytes and is required for host erythrocyte invasion. The polypeptide is Merozoite surface protein 1 (Plasmodium falciparum (isolate NF7 / Ghana)).